Here is an 86-residue protein sequence, read N- to C-terminus: Acyl carrier protein (86 aa).

A Carrier domain is found at 10-85; it reads DKIEQKVIEM…DVIKYIKERQ (76 aa). At S45 the chain carries O-(pantetheine 4'-phosphoryl)serine.

It belongs to the acyl carrier protein (ACP) family. Post-translationally, 4'-phosphopantetheine is transferred from CoA to a specific serine of apo-ACP by AcpS. This modification is essential for activity because fatty acids are bound in thioester linkage to the sulfhydryl of the prosthetic group.

The protein resides in the cytoplasm. Its pathway is lipid metabolism; fatty acid biosynthesis. Functionally, carrier of the growing fatty acid chain in fatty acid biosynthesis. The polypeptide is Acyl carrier protein (Rickettsia prowazekii (strain Madrid E)).